Reading from the N-terminus, the 601-residue chain is Urocanate hydratase (601 aa).

Residues 63 to 64 (GG) and Gln141 each bind NAD(+). Positions 172–201 (SDRPSALLKQGLSPEGTAPGSGRSSAQVPG) are insert. Residues 179 to 200 (LKQGLSPEGTAPGSGRSSAQVP) are disordered. NAD(+) is bound by residues 216 to 218 (GMG), Glu236, 282 to 283 (NA), 307 to 311 (QTSAH), 317 to 318 (YL), and Tyr368. The active site involves Cys456. Residue Gly538 participates in NAD(+) binding.

It belongs to the urocanase family. The cofactor is NAD(+).

It localises to the cytoplasm. The catalysed reaction is 4-imidazolone-5-propanoate = trans-urocanate + H2O. It functions in the pathway amino-acid degradation; L-histidine degradation into L-glutamate; N-formimidoyl-L-glutamate from L-histidine: step 2/3. Catalyzes the conversion of urocanate to 4-imidazolone-5-propionate. The polypeptide is Urocanate hydratase (Ralstonia nicotianae (strain ATCC BAA-1114 / GMI1000) (Ralstonia solanacearum)).